The sequence spans 261 residues: Enoyl-[acyl-carrier-protein] reductase [NADH] FabI (261 aa).

NAD(+)-binding positions include Gly15, 21–22 (SI), Gln42, 66–67 (DV), and Met94. Substrate is bound at residue Ala97. Residues Tyr147 and Tyr157 each act as proton acceptor in the active site. NAD(+) contacts are provided by residues Lys164 and 193–197 (IKTLA).

The protein belongs to the short-chain dehydrogenases/reductases (SDR) family. FabI subfamily. As to quaternary structure, homotetramer.

It carries out the reaction a 2,3-saturated acyl-[ACP] + NAD(+) = a (2E)-enoyl-[ACP] + NADH + H(+). It functions in the pathway lipid metabolism; fatty acid biosynthesis. In terms of biological role, catalyzes the reduction of a carbon-carbon double bond in an enoyl moiety that is covalently linked to an acyl carrier protein (ACP). Involved in the elongation cycle of fatty acid which are used in the lipid metabolism. The protein is Enoyl-[acyl-carrier-protein] reductase [NADH] FabI (fabI) of Rickettsia prowazekii (strain Madrid E).